The following is a 361-amino-acid chain: Beta-hexosaminidase (361 aa).

Substrate is bound by residues Asp69, Arg77, Arg144, and 174-175 (KH). Residue His187 is the Proton donor/acceptor of the active site. Asp258 acts as the Nucleophile in catalysis.

Belongs to the glycosyl hydrolase 3 family. NagZ subfamily.

The protein resides in the cytoplasm. The enzyme catalyses Hydrolysis of terminal non-reducing N-acetyl-D-hexosamine residues in N-acetyl-beta-D-hexosaminides.. Its pathway is cell wall biogenesis; peptidoglycan recycling. Functionally, plays a role in peptidoglycan recycling by cleaving the terminal beta-1,4-linked N-acetylglucosamine (GlcNAc) from peptide-linked peptidoglycan fragments, giving rise to free GlcNAc, anhydro-N-acetylmuramic acid and anhydro-N-acetylmuramic acid-linked peptides. This Neisseria meningitidis serogroup A / serotype 4A (strain DSM 15465 / Z2491) protein is Beta-hexosaminidase.